Consider the following 670-residue polypeptide: Protein-glutamine gamma-glutamyltransferase 4 (670 aa).

2 N-linked (GlcNAc...) asparagine glycosylation sites follow: Asn151 and Asn219. Cys255 is an active-site residue. A glycan (N-linked (GlcNAc...) asparagine) is linked at Asn288. Catalysis depends on residues His314 and Asp337. Ca(2+) contacts are provided by Asn377, Asp379, Glu429, and Glu434. N-linked (GlcNAc...) asparagine glycans are attached at residues Asn456 and Asn491.

It belongs to the transglutaminase superfamily. Transglutaminase family. In terms of assembly, homodimer. Ca(2+) serves as cofactor. As to expression, expressed in the coagulating gland and in the dorsal part of the prostate. Not expressed in the brain, heart, kidney, liver, lung, muscle, pancreas, spleen, stomach, testis and thymus.

Its subcellular location is the secreted. The enzyme catalyses L-glutaminyl-[protein] + L-lysyl-[protein] = [protein]-L-lysyl-N(6)-5-L-glutamyl-[protein] + NH4(+). Functionally, associated with the mammalian reproductive process. Plays an important role in the formation of the seminal coagulum through the cross-linking of specific proteins present in the seminal plasma. Transglutaminase is also required to stabilize the copulatory plug. The protein is Protein-glutamine gamma-glutamyltransferase 4 of Mus musculus (Mouse).